A 601-amino-acid chain; its full sequence is UvrABC system protein C (601 aa).

One can recognise a GIY-YIG domain in the interval 15–94 (LQPGVYLFKN…IKSYKPRYNI (80 aa)). In terms of domain architecture, UVR spans 202–237 (QEIVREKEKEMAMAARSLEFEKAARLRDQIQSLRQL).

This sequence belongs to the UvrC family. In terms of assembly, interacts with UvrB in an incision complex.

It localises to the cytoplasm. The UvrABC repair system catalyzes the recognition and processing of DNA lesions. UvrC both incises the 5' and 3' sides of the lesion. The N-terminal half is responsible for the 3' incision and the C-terminal half is responsible for the 5' incision. The protein is UvrABC system protein C of Syntrophomonas wolfei subsp. wolfei (strain DSM 2245B / Goettingen).